Reading from the N-terminus, the 506-residue chain is Galactose/methyl galactoside import ATP-binding protein MglA (506 aa).

2 ABC transporter domains span residues 14–249 and 264–506; these read LEMS…VGRS and VILE…SLHL. 46–53 lines the ATP pocket; that stretch reads GENGAGKS.

Belongs to the ABC transporter superfamily. Galactose/methyl galactoside importer (TC 3.A.1.2.3) family. In terms of assembly, the complex is composed of one ATP-binding protein (MglA), two transmembrane proteins (MglC) and a solute-binding protein (MglB).

Its subcellular location is the cell inner membrane. It catalyses the reaction D-galactose(out) + ATP + H2O = D-galactose(in) + ADP + phosphate + H(+). It carries out the reaction methyl beta-D-galactoside(out) + ATP + H2O = methyl beta-D-galactoside(in) + ADP + phosphate + H(+). In terms of biological role, part of the ABC transporter complex MglABC involved in galactose/methyl galactoside import. Responsible for energy coupling to the transport system. This is Galactose/methyl galactoside import ATP-binding protein MglA from Escherichia coli (strain K12).